Consider the following 161-residue polypeptide: Ribonuclease P protein component (161 aa).

The segment at 1-20 (MPDELRAEKSFPSKPYDSLK) is disordered.

The protein belongs to the RnpA family. Consists of a catalytic RNA component (M1 or rnpB) and a protein subunit.

The enzyme catalyses Endonucleolytic cleavage of RNA, removing 5'-extranucleotides from tRNA precursor.. RNaseP catalyzes the removal of the 5'-leader sequence from pre-tRNA to produce the mature 5'-terminus. It can also cleave other RNA substrates such as 4.5S RNA. The protein component plays an auxiliary but essential role in vivo by binding to the 5'-leader sequence and broadening the substrate specificity of the ribozyme. The sequence is that of Ribonuclease P protein component from Helicobacter pylori (strain P12).